A 615-amino-acid polypeptide reads, in one-letter code: Zinc finger protein 653 (615 aa).

Disordered stretches follow at residues 1–46, 93–115, and 174–235; these read MAER…ARRR, RSGRHGKPWEQVPKKPKRKKRRR, and PLSD…SGLI. Residues 7-25 are compositionally biased toward low complexity; that stretch reads EPGAEAEAGAGGEAAAEEG. Residues 106–115 are compositionally biased toward basic residues; the sequence is KKPKRKKRRR. 2 stretches are compositionally biased toward low complexity: residues 192–203 and 212–232; these read GSSDSSSSGSSS and QPAKASAAAAALTPASPTGSS. 5 C2H2-type zinc fingers span residues 467 to 492, 498 to 522, 528 to 550, 556 to 578, and 586 to 609; these read FHCPYEGCSQVYVALSSFQNHVNLVH, KVCPHPGCGKKFYLSNHLRRHMIIH, FTCETCGKSFKRKNHLEVHRRTH, LQCEICGYQCRQRASLNWHMKKH, and FTCDRCGKRFEKLDSVKFHTLKSH.

Belongs to the krueppel C2H2-type zinc-finger protein family. As to quaternary structure, interacts with NR5A1. In terms of tissue distribution, highly expressed in testis and spleen. Moderately expressed in lung, adrenal gland, uterus, and ovary. Very low expression in pancreas, heart, skeletal muscle, adipose tissue, kidney, and liver.

The protein localises to the nucleus. Transcriptional repressor. May repress NR5A1, PPARG, NR1H3, NR4A2, ESR1 and NR3C1 transcriptional activity. This chain is Zinc finger protein 653 (Znf653), found in Mus musculus (Mouse).